A 269-amino-acid chain; its full sequence is Cytolethal distending toxin subunit B homolog (269 aa).

The first 22 residues, 1–22 (MKKPVFFLLTMIICSYISFACA), serve as a signal peptide directing secretion.

It localises to the secreted. Produces a CDT (cytolethal distending toxin) activity, which causes DNA damage in intoxicated cells. This damage induces G2/M cell cycle arrest, chromatin fragmentation, cell distention and nucleus enlargement. The sequence is that of Cytolethal distending toxin subunit B homolog (cdtB) from Salmonella typhi.